Here is a 379-residue protein sequence, read N- to C-terminus: GDSL esterase/lipase At3g05180 (379 aa).

The N-terminal stretch at 1 to 27 (METLFHTLLRLLLFVAISHTLSPLAGS) is a signal peptide. Ser-43 (nucleophile) is an active-site residue. N-linked (GlcNAc...) asparagine glycosylation is found at Asn-294 and Asn-330. Catalysis depends on residues Asp-349 and His-352.

Belongs to the 'GDSL' lipolytic enzyme family.

Its subcellular location is the secreted. The protein is GDSL esterase/lipase At3g05180 of Arabidopsis thaliana (Mouse-ear cress).